The sequence spans 289 residues: E3 ubiquitin-protein ligase MARCHF1 (289 aa).

The responsible for low stability stretch occupies residues 1–66 (MLGWCEAIAR…SPTTGTAPRS (66 aa)). The tract at residues 13-69 (HRIPNNTRTPEISGDLADASQTSTLNEKSPGRSASRSSNISKASSPTTGTAPRSQSR) is disordered. Residues 43–58 (GRSASRSSNISKASSP) show a composition bias toward low complexity. Positions 59–69 (TTGTAPRSQSR) are enriched in polar residues. The RING-CH-type zinc-finger motif lies at 72–133 (VCPSTQDICR…ELCKYDFIME (62 aa)). Positions 80, 83, 97, 99, 107, 110, 123, and 126 each coordinate Zn(2+). Helical transmembrane passes span 155–175 (IFCS…SLYV) and 197–217 (FWTK…FMYV). The tract at residues 222-279 (YVQLWRRLKAYNRVIFVQNCPDTAKKLEKNFSCNVNTDIKDAVVVPVPQTGANSLPSA) is responsible for down-regulation of CD86 and MHC class II cell surface expression.

In terms of assembly, interacts with CD83; this interaction antagonizes MARCHF1-mediated MHC II and CD86 down-regulation. Ubiquitinated via ubiquitin-conjugating enzyme E2 D1/UBE2D1 independently of lysines, leading to proteolytic degradation. Post-translationally, has a short half-life. Instability/short half-life permits rapid changes that allow efficient induction of antigen presentation once antigen presenting cells, APCs, receive maturation signals. Small changes in protein levels significantly alter the cell surface display of MHC class II proteins. As to expression, expressed in antigen presenting cells, APCs, located in lymph nodes and spleen. Also expressed in lung. Expression is high in follicular B-cells, moderate in dendritic cells and low in splenic T-cells.

It localises to the golgi apparatus. Its subcellular location is the trans-Golgi network membrane. The protein localises to the lysosome membrane. The protein resides in the cytoplasmic vesicle membrane. It is found in the late endosome membrane. It localises to the early endosome membrane. Its subcellular location is the cell membrane. It carries out the reaction S-ubiquitinyl-[E2 ubiquitin-conjugating enzyme]-L-cysteine + [acceptor protein]-L-lysine = [E2 ubiquitin-conjugating enzyme]-L-cysteine + N(6)-ubiquitinyl-[acceptor protein]-L-lysine.. Its pathway is protein modification; protein ubiquitination. Its function is as follows. E3 ubiquitin-protein ligase that mediates ubiquitination of TFRC, CD86, FAS and MHC class II proteins, such as HLA-DR alpha and beta, and promotes their subsequent endocytosis and sorting to lysosomes via multivesicular bodies. By constitutively ubiquitinating MHC class II proteins in immature dendritic cells, down-regulates their cell surface localization thus sequestering them in the intracellular endosomal system. Also regulates insulin sensitivity by controlling surface expression of the insulin receptor subunit beta/INSR by direct ubiquitination and degradation. In terms of biological role, (Microbial infection) Plays a role in iron metabolism by regulating the levels of the transferrin receptor TFRC during human cytomegalovirus infection, subsequently contributing to a proviral effect. The polypeptide is E3 ubiquitin-protein ligase MARCHF1 (Homo sapiens (Human)).